The primary structure comprises 417 residues: Cytoplasmic tRNA 2-thiolation protein 2 (417 aa).

The segment covering 1–11 has biased composition (acidic residues); sequence MCSIVEDDFGD. Positions 1–24 are disordered; that stretch reads MCSIVEDDFGDEGGAHAMKEDTPQ. Over residues 13–22 the composition is skewed to basic and acidic residues; it reads GGAHAMKEDT.

Belongs to the CTU2/NCS2 family.

It localises to the cytoplasm. It functions in the pathway tRNA modification; 5-methoxycarbonylmethyl-2-thiouridine-tRNA biosynthesis. In terms of biological role, plays a central role in 2-thiolation of mcm(5)S(2)U at tRNA wobble positions of tRNA(Lys), tRNA(Glu) and tRNA(Gln). May act by forming a heterodimer with NCS6/CTU1 that ligates sulfur from thiocarboxylated URM1 onto the uridine of tRNAs at wobble position. The protein is Cytoplasmic tRNA 2-thiolation protein 2 of Anopheles gambiae (African malaria mosquito).